Consider the following 1018-residue polypeptide: Inner centromere protein pic1 (1018 aa).

Phosphoserine is present on Ser-171. Disordered stretches follow at residues Val-184–Lys-207, Arg-247–Pro-287, Ala-306–Ile-365, Thr-522–Ser-556, Glu-570–Pro-756, Glu-781–Lys-813, Thr-848–Asn-867, and His-877–Trp-944. Polar residues-rich tracts occupy residues Thr-189–Ser-199 and Pro-268–Pro-287. Residues Ser-309–Tyr-320 are compositionally biased toward low complexity. 2 stretches are compositionally biased toward polar residues: residues Val-329–Ser-339 and Thr-522–Pro-554. Basic and acidic residues-rich tracts occupy residues Glu-570–Ser-580 and Arg-624–Ser-644. Positions Asn-645 to Ile-664 are enriched in polar residues. 2 stretches are compositionally biased toward basic and acidic residues: residues Arg-665–Pro-679 and Lys-692–Thr-702. Polar residues-rich tracts occupy residues Arg-705–Ser-719 and Ser-784–Gln-808. Positions Pro-890–Ser-902 are enriched in low complexity.

This sequence belongs to the INCENP family. In terms of assembly, component of the CPC complex at least composed of ark1, bir1 and pic1.

It is found in the nucleus. Its subcellular location is the cytoplasm. The protein resides in the cytoskeleton. It localises to the spindle. Component of the chromosomal passenger complex (CPC), a complex that acts as a key regulator of mitosis. Has a role in sister chromatid cohesion and condensation. The polypeptide is Inner centromere protein pic1 (pic1) (Schizosaccharomyces pombe (strain 972 / ATCC 24843) (Fission yeast)).